Reading from the N-terminus, the 1231-residue chain is Pesticidal crystal protein Cry1Bd (1231 aa).

This sequence belongs to the delta endotoxin family.

Its function is as follows. Promotes colloidosmotic lysis by binding to the midgut epithelial cells of lepidopteran larvae. Toxic to Plutella xylostella. The polypeptide is Pesticidal crystal protein Cry1Bd (cry1Bd) (Bacillus thuringiensis subsp. wuhanensis).